We begin with the raw amino-acid sequence, 415 residues long: Acrosin (415 aa).

An N-terminal signal peptide occupies residues 1–16 (MLPTAVLLVLAVSVAA). Residue asparagine 19 is glycosylated (N-linked (GlcNAc...) asparagine). Intrachain disulfides connect cysteine 22-cysteine 152, cysteine 26-cysteine 160, cysteine 71-cysteine 87, cysteine 175-cysteine 244, cysteine 207-cysteine 223, and cysteine 234-cysteine 264. The Peptidase S1 domain maps to 40 to 288 (VVGGMSAEPG…YLNWIASKIG (249 aa)). Active-site charge relay system residues include histidine 86 and aspartate 140. Asparagine 208 carries an N-linked (GlcNAc...) asparagine glycan. The active-site Charge relay system is serine 238. 2 disordered regions span residues 296-376 (QLGT…PPQA) and 395-415 (FSSG…LPAS). Composition is skewed to pro residues over residues 300 to 312 (PPRP…PVRP) and 328 to 367 (PPGP…PPPQ). The propeptide at 339–415 (PRPPAPPPAP…TTDLQELPAS (77 aa)) is pro-rich. The segment covering 395 to 409 (FSSGRSYYETETTDL) has biased composition (polar residues).

It belongs to the peptidase S1 family. Heavy chain (catalytic) and a light chain linked by two disulfide bonds. Forms a heterodimer with SERPINA5.

The catalysed reaction is Preferential cleavage: Arg-|-Xaa, Lys-|-Xaa.. Inhibited by SERPINA5. In terms of biological role, acrosin is the major protease of mammalian spermatozoa. It is a serine protease of trypsin-like cleavage specificity, it is synthesized in a zymogen form, proacrosin and stored in the acrosome. The sequence is that of Acrosin (ACR) from Sus scrofa (Pig).